Consider the following 77-residue polypeptide: DNA-directed RNA polymerase subunit epsilon (77 aa).

Belongs to the RNA polymerase subunit epsilon family. As to quaternary structure, RNAP is composed of a core of 2 alpha, a beta and a beta' subunit. The core is associated with a delta subunit, and at least one of epsilon or omega. When a sigma factor is associated with the core the holoenzyme is formed, which can initiate transcription.

The catalysed reaction is RNA(n) + a ribonucleoside 5'-triphosphate = RNA(n+1) + diphosphate. Functionally, a non-essential component of RNA polymerase (RNAP). This is DNA-directed RNA polymerase subunit epsilon from Streptococcus pneumoniae serotype 19F (strain G54).